The primary structure comprises 142 residues: Baculoviral IAP repeat-containing protein 5 (142 aa).

The stretch at R18–S88 is one BIR repeat. S20 carries the phosphoserine; by AURKC modification. K23 is modified (N6-acetyllysine). T34 carries the post-translational modification Phosphothreonine; by CDK1 and CDK15. T48 is modified (phosphothreonine). Positions 57, 60, 77, and 84 each coordinate Zn(2+). K90, K110, K112, and K115 each carry N6-acetyllysine. T117 carries the post-translational modification Phosphothreonine; by AURKB. N6-acetyllysine is present on K129.

Belongs to the IAP family. Monomer or homodimer. Exists as a homodimer in the apo state and as a monomer in the CPC-bound state. The monomer protects cells against apoptosis more efficiently than the dimer. Only the dimeric form is capable of enhancing tubulin stability in cells. When phosphorylated, interacts with LAMTOR5/HBXIP; the resulting complex binds pro-CASP9, as well as active CASP9, but much less efficiently. Component of the chromosomal passenger complex (CPC) composed of at least BIRC5/survivin, CDCA8/borealin, INCENP, AURKB or AURKC; in the complex forms a triple-helix bundle-based subcomplex with INCENP and CDCA8. Interacts with JTB. Interacts (via BIR domain) with histone H3 phosphorylated at 'Thr-3' (H3pT3). Interacts with EVI5. Interacts with GTP-bound RAN in both the S and M phases of the cell cycle. Interacts with USP9X. Interacts with tubulin. Interacts with BIRC2/c-IAP1. The acetylated form at Lys-129 interacts with STAT3. The monomeric form deacetylated at Lys-129 interacts with XPO1/CRM1. The monomeric form interacts with XIAP/BIRC4. Both the dimeric and monomeric form can interact with DIABLO/SMAC. Interacts with BIRC6/bruce. Interacts with FBXL7; this interaction facilitates the polyubiquitination and subsequent proteasomal degradation of BIRC5 by the SCF(FBXL7) E3 ubiquitin-protein ligase complex. Post-translationally, ubiquitinated by the Cul9-RING ubiquitin-protein ligase complex, leading to its degradation. Ubiquitination is required for centrosomal targeting. Deubiquitinated by USP35 or USP38; leading to stabilization. In terms of processing, acetylation at Lys-129 results in its homodimerization, while deacetylation promotes the formation of monomers which heterodimerize with XPO1/CRM1 which facilitates its nuclear export. The acetylated form represses STAT3 transactivation. The dynamic equilibrium between its acetylation and deacetylation at Lys-129 determines its interaction with XPO1/CRM1, its subsequent subcellular localization, and its ability to inhibit STAT3 transactivation. In vitro phosphorylation at Thr-117 by AURKB prevents interaction with INCENP and localization to mitotic chromosomes. Phosphorylation at Thr-48 by CK2 is critical for its mitotic and anti-apoptotic activities. Phosphorylation at Thr-34 by CDK15 is critical for its anti-apoptotic activity. Phosphorylation at Ser-20 by AURKC is critical for regulation of proper chromosome alignment and segregation, and possibly cytokinesis.

The protein localises to the cytoplasm. The protein resides in the nucleus. It localises to the chromosome. It is found in the centromere. Its subcellular location is the cytoskeleton. The protein localises to the spindle. The protein resides in the kinetochore. It localises to the midbody. Its function is as follows. Multitasking protein that has dual roles in promoting cell proliferation and preventing apoptosis. Component of a chromosome passage protein complex (CPC) which is essential for chromosome alignment and segregation during mitosis and cytokinesis. Acts as an important regulator of the localization of this complex; directs CPC movement to different locations from the inner centromere during prometaphase to midbody during cytokinesis and participates in the organization of the center spindle by associating with polymerized microtubules. Involved in the recruitment of CPC to centromeres during early mitosis via association with histone H3 phosphorylated at 'Thr-3' (H3pT3) during mitosis. The complex with RAN plays a role in mitotic spindle formation by serving as a physical scaffold to help deliver the RAN effector molecule TPX2 to microtubules. May counteract a default induction of apoptosis in G2/M phase. The acetylated form represses STAT3 transactivation of target gene promoters. May play a role in neoplasia. Inhibitor of CASP3 and CASP7. Essential for the maintenance of mitochondrial integrity and function. The sequence is that of Baculoviral IAP repeat-containing protein 5 (BIRC5) from Canis lupus familiaris (Dog).